A 354-amino-acid polypeptide reads, in one-letter code: Guanine nucleotide-binding protein alpha-16 subunit (354 aa).

The N-myristoyl glycine moiety is linked to residue Gly-2. Cys-3 is lipidated: S-palmitoyl cysteine. Residues 31–354 (KTVKLLLLGA…RDNLRTCGLY (324 aa)) form the G-alpha domain. Positions 34–47 (KLLLLGAGESGKST) are G1 motif. GTP contacts are provided by residues 39–46 (GAGESGKS), 174–180 (LRTRIKT), 199–203 (DVGGQ), 268–271 (NKKD), and Ala-326. Positions 46 and 180 each coordinate Mg(2+). The G2 motif stretch occupies residues 172-180 (DVLRTRIKT). The G3 motif stretch occupies residues 195–204 (FVVFDVGGQR). Residues 264–271 (ILFLNKKD) are G4 motif. The interval 324 to 329 (TCATDT) is G5 motif.

The protein belongs to the G-alpha family. In terms of assembly, g proteins are composed of 3 units; alpha, beta and gamma. The alpha chain contains the guanine nucleotide binding site.

Functionally, guanine nucleotide-binding proteins (G proteins) are involved as modulators or transducers in various transmembrane signaling systems. In the 1-cell embryo, probably together with goa-1, controls nuclear rotation and spindle elongation during mitosis. During the first embryonic cell divisons, plays a role in gpr-1/2 cortical localization and in the proper orientation of EMS blastomere mitotic spindle. The protein is Guanine nucleotide-binding protein alpha-16 subunit (gpa-16) of Caenorhabditis briggsae.